The following is a 526-amino-acid chain: Neutrophil cytosol factor 2 (526 aa).

TPR repeat units follow at residues Ser-37 to Leu-70, Ala-71 to Asn-104, and Cys-121 to Pro-154. Thr-233 is modified (phosphothreonine). Residues Leu-240–Leu-299 form the SH3 1 domain. The segment covering Pro-303–Ser-315 has biased composition (low complexity). Residues Pro-303–Leu-346 are disordered. Residues Lys-336 to Lys-345 are compositionally biased toward basic and acidic residues. In terms of domain architecture, PB1 spans Pro-351–Thr-429. The residue at position 399 (Ser-399) is a Phosphoserine. Positions Gln-433–Lys-458 are disordered. Basic and acidic residues predominate over residues Asp-437 to Asp-446. The 60-residue stretch at Lys-457–Thr-516 folds into the SH3 2 domain.

Belongs to the NCF2/NOXA1 family. In terms of assembly, component of the phagocyte NADPH oxidase complex composed of an obligatory core heterodimer formed by the membrane proteins CYBA and CYBB and the cytosolic regulatory subunits NCF1/p47-phox, NCF2/p67-phox, NCF4/p40-phox and the small GTPase RAC1 or RAC2. Part of a cytosolic complex composed at least by NCF1, NCF2 and NCF4. Interacts with NCF4. Interacts (via the C-terminal SH3 domain) with NCF1 (via C-terminus). Interacts with SYTL1 and RAC1. May interact with NOXO1. Interacts with S100A8 and calprotectin (S100A8/9). Interacts with GBP7 (via GB1/RHD3-type G domain). Interacts with CYBB; the interaction is enhanced in the presence of GBP7.

Its subcellular location is the cytoplasm. Functionally, subunit of the phagocyte NADPH oxidase complex that mediates the transfer of electrons from cytosolic NADPH to O2 to produce the superoxide anion (O2(-)). In the activated complex, electrons are first transferred from NADPH to flavin adenine dinucleotide (FAD) and subsequently transferred via two heme molecules to molecular oxygen, producing superoxide through an outer-sphere reaction. Activation of the NADPH oxidase complex is initiated by the assembly of cytosolic subunits of the NADPH oxidase complex with the core NADPH oxidase complex to form a complex at the plasma membrane or phagosomal membrane. This activation process is initiated by phosphorylation dependent binding of the cytosolic NCF1/p47-phox subunit to the C-terminus of CYBA/p22-phox. In Homo sapiens (Human), this protein is Neutrophil cytosol factor 2.